A 391-amino-acid chain; its full sequence is Argininosuccinate synthase (391 aa).

6–14 lines the ATP pocket; that stretch reads AYSGGLDTT. L-citrulline is bound at residue Tyr-84. Gly-114 serves as a coordination point for ATP. Thr-116, Asn-120, and Asp-121 together coordinate L-aspartate. Asn-120 is an L-citrulline binding site. Residues Arg-124, Ser-171, Ser-180, Glu-253, and Tyr-265 each contribute to the L-citrulline site.

The protein belongs to the argininosuccinate synthase family. Type 1 subfamily. As to quaternary structure, homotetramer.

It is found in the cytoplasm. It carries out the reaction L-citrulline + L-aspartate + ATP = 2-(N(omega)-L-arginino)succinate + AMP + diphosphate + H(+). The protein operates within amino-acid biosynthesis; L-arginine biosynthesis; L-arginine from L-ornithine and carbamoyl phosphate: step 2/3. This Sulfolobus acidocaldarius (strain ATCC 33909 / DSM 639 / JCM 8929 / NBRC 15157 / NCIMB 11770) protein is Argininosuccinate synthase.